A 435-amino-acid chain; its full sequence is Evolutionarily conserved signaling intermediate in Toll pathway, mitochondrial (435 aa).

The transit peptide at 1 to 48 (MSWVQVNLLVRSLSRGWGGLCRPALSGTPFAQVSLQALRGLHCSAATH) directs the protein to the mitochondrion. Lys-372 is covalently cross-linked (Glycyl lysine isopeptide (Lys-Gly) (interchain with G-Cter in ubiquitin)). The segment at 401–435 (LTTSRLEGQSPPHSPPKGPEEDDETIQAEQQQGQS) is disordered.

This sequence belongs to the ECSIT family. As to quaternary structure, interacts with MAP3K1, SMAD4 and TRAF6. Interacts with SMAD1 only after BMP4-treatment. Part of the mitochondrial complex I assembly/MCIA complex that comprises at least the core subunits TMEM126B, NDUFAF1, ECSIT and ACAD9 and complement subunits such as COA1 and TMEM186. Interacts with NDUFAF1. Interacts with ACAD9. Interacts with TRIM59. Interacts with TMEM70 and TMEM242. Interacts (when ubiquitinated) with NF-kappa-B subunits RELA and NFKB1. Interacts with RIGI, IFIT1 and MAVS; these interactions promote RLR-mediated type I IFN induction. Interacts with SQSTM1; this interaction inhibits TLR4 signaling via functional regulation of the TRAF6-ECSIT complex. Interacts with cereblon/CRBN; this interaction inhibits the ubiquitination of ECSIT. In terms of processing, ubiquitinated on Lys-372; leading to translocation in the nucleus together with RELA and NFKB1 and expression of NF-kappa-B-dependent genes. In terms of tissue distribution, detected in heart, brain, lung, liver, skeletal muscle, kidney and testis. Detected in embryonic mesoderm and epiblast, and in extraembryonic ectoderm.

It localises to the cytoplasm. Its subcellular location is the nucleus. The protein resides in the mitochondrion. Functionally, adapter protein that plays a role in different signaling pathways including TLRs and IL-1 pathways or innate antiviral induction signaling. Plays a role in the activation of NF-kappa-B by forming a signal complex with TRAF6 and TAK1/MAP3K7 to activate TAK1/MAP3K7 leading to activation of IKKs. Once ubiquitinated, interacts with the dissociated RELA and NFKB1 proteins and translocates to the nucleus where it induces NF-kappa-B-dependent gene expression. Plays a role in innate antiviral immune response by bridging the pattern recognition receptors RIGI and MDA5/IFIT1 to the MAVS complex at the mitochondrion. Promotes proteolytic activation of MAP3K1. Involved in the BMP signaling pathway. Required for normal embryonic development. Its function is as follows. As part of the MCIA complex, involved in the assembly of the mitochondrial complex I. The sequence is that of Evolutionarily conserved signaling intermediate in Toll pathway, mitochondrial from Mus musculus (Mouse).